The sequence spans 481 residues: Methylenetetrahydrofolate--tRNA-(uracil-5-)-methyltransferase TrmFO (481 aa).

Residue 13–18 (GGGLAG) coordinates FAD.

Belongs to the MnmG family. TrmFO subfamily. FAD serves as cofactor.

It is found in the cytoplasm. It catalyses the reaction uridine(54) in tRNA + (6R)-5,10-methylene-5,6,7,8-tetrahydrofolate + NADH + H(+) = 5-methyluridine(54) in tRNA + (6S)-5,6,7,8-tetrahydrofolate + NAD(+). It carries out the reaction uridine(54) in tRNA + (6R)-5,10-methylene-5,6,7,8-tetrahydrofolate + NADPH + H(+) = 5-methyluridine(54) in tRNA + (6S)-5,6,7,8-tetrahydrofolate + NADP(+). Its function is as follows. Catalyzes the folate-dependent formation of 5-methyl-uridine at position 54 (M-5-U54) in all tRNAs. The sequence is that of Methylenetetrahydrofolate--tRNA-(uracil-5-)-methyltransferase TrmFO from Agrobacterium fabrum (strain C58 / ATCC 33970) (Agrobacterium tumefaciens (strain C58)).